Consider the following 521-residue polypeptide: Bifunctional dihydrofolate reductase-thymidylate synthase (521 aa).

Residues 17–194 form the DHFR domain; that stretch reads NYQVVVAGTR…IRHSFVSFVR (178 aa). Residue Val-21 participates in substrate binding. Residues Ala-23 and 29–35 contribute to the NADP(+) site; that span reads GIGKDGV. Asp-43 lines the substrate pocket. NADP(+)-binding positions include 67–69 and 88–91; these read RKT and LTRS. Residue Ile-130 coordinates substrate. 131–138 contacts NADP(+); that stretch reads GGGQVLRE. Thr-151 is a substrate binding site. Residues 197–521 form a thymidylate synthase region; that stretch reads KSVAETHESN…HQKIEMKMAV (325 aa). Residue Arg-258 coordinates dUMP. Cys-403 is an active-site residue. DUMP is bound by residues His-404, 422–426, Asn-434, and 464–466; these read QRSAD and HVY.

The protein in the N-terminal section; belongs to the dihydrofolate reductase family. This sequence in the C-terminal section; belongs to the thymidylate synthase family.

The catalysed reaction is (6S)-5,6,7,8-tetrahydrofolate + NADP(+) = 7,8-dihydrofolate + NADPH + H(+). The enzyme catalyses dUMP + (6R)-5,10-methylene-5,6,7,8-tetrahydrofolate = 7,8-dihydrofolate + dTMP. Its pathway is cofactor biosynthesis; tetrahydrofolate biosynthesis; 5,6,7,8-tetrahydrofolate from 7,8-dihydrofolate: step 1/1. Its function is as follows. Bifunctional enzyme. Involved in de novo dTMP biosynthesis. Key enzyme in folate metabolism. Can play two different roles depending on the source of dihydrofolate: de novo synthesis of tetrahydrofolate or recycling of the dihydrofolate released as one of the end products of the TS catalyzed reaction. Catalyzes an essential reaction for de novo glycine and purine synthesis, DNA precursor synthesis, and for the conversion of dUMP to dTMP. In Zea mays (Maize), this protein is Bifunctional dihydrofolate reductase-thymidylate synthase (DRTS).